The following is a 485-amino-acid chain: Sphingosine kinase 1 (485 aa).

Residues 116 to 258 enclose the DAGKc domain; sequence GRPKKLLVFV…LDVATISQGT (143 aa). Residues 126–128 and threonine 158 each bind ATP; that span reads NPF. 183–186 serves as a coordination point for substrate; that stretch reads SGDG. Aspartate 185 (proton donor/acceptor) is an active-site residue. ATP-binding positions include glutamate 190 and 215–217; that span reads GSG. Aspartate 276 provides a ligand contact to substrate. ATP is bound by residues arginine 283, arginine 289, and 446 to 448; that span reads DGE.

The cofactor is Mg(2+). Highly expressed in stems and flowers and at lower levels in roots, leaves and siliques.

The protein localises to the vacuole membrane. The enzyme catalyses a sphingoid base + ATP = a sphingoid 1-phosphate + ADP + H(+). Activated by phosphatidic acid (PA). Binding with PA stimulates the activity by promoting the binding of substrate to the catalytic site. Its function is as follows. Involved in the production of sphingolipid metabolites. Phosphorylates sphingosine and various sphingoid long-chain base (LCB) products, such as phytosphingosine (PHS, 4-hydroxysphinganine), 4-hydroxy-8-sphingenine, 4,8-sphingadienine, D-erythro-dihydrosphingosine and D,L-threo-dihydrosphingosine. Is required for abscisic acid (ABA) signaling that mediates stomatal closure, inhibition of seed germination and root elongation. May function upstream of PLDALPHA1 and phosphatidic acid (PA) in an amplification response to ABA that mediates stomatal closure. The sequence is that of Sphingosine kinase 1 (SPHK1) from Arabidopsis thaliana (Mouse-ear cress).